A 239-amino-acid polypeptide reads, in one-letter code: 1-(5-phosphoribosyl)-5-[(5-phosphoribosylamino)methylideneamino] imidazole-4-carboxamide isomerase (239 aa).

The active-site Proton acceptor is Asp-8. Asp-129 functions as the Proton donor in the catalytic mechanism.

It belongs to the HisA/HisF family.

It is found in the cytoplasm. It carries out the reaction 1-(5-phospho-beta-D-ribosyl)-5-[(5-phospho-beta-D-ribosylamino)methylideneamino]imidazole-4-carboxamide = 5-[(5-phospho-1-deoxy-D-ribulos-1-ylimino)methylamino]-1-(5-phospho-beta-D-ribosyl)imidazole-4-carboxamide. Its pathway is amino-acid biosynthesis; L-histidine biosynthesis; L-histidine from 5-phospho-alpha-D-ribose 1-diphosphate: step 4/9. The protein is 1-(5-phosphoribosyl)-5-[(5-phosphoribosylamino)methylideneamino] imidazole-4-carboxamide isomerase of Bacillus cereus (strain ATCC 10987 / NRS 248).